A 329-amino-acid polypeptide reads, in one-letter code: Transmembrane protein I329L (329 aa).

The N-terminal stretch at 1-31 is a signal peptide; the sequence is MLRVFIFFVFLGSGLTGRIKPQVTCKYFISE. N-linked (GlcNAc...) asparagine; by host glycosylation is found at N32, N39, N44, N76, N82, and N101. Residues 32–239 lie on the Extracellular side of the membrane; that stretch reads NNTWYKYNVT…NTERYKSCYP (208 aa). Residues 112-133 form an LRR repeat; that stretch reads ELKFLDLRYNDLQVIDYNILRK. N-linked (GlcNAc...) asparagine; by host glycosylation is found at N185 and N219. Cysteines 195 and 237 form a disulfide. The chain crosses the membrane as a helical span at residues 240–260; that stretch reads LVFISILCSCISFLFLFICLL. Topologically, residues 261–329 are cytoplasmic; it reads RSICKKYSCT…EKKVSCSRRK (69 aa).

This sequence belongs to the asfivirus I329L family. In terms of processing, highly glycosylated.

The protein resides in the host endoplasmic reticulum membrane. The protein localises to the host Golgi apparatus membrane. Functionally, viral TLR3 homolog that probably prevents TLR3 dimerization and subsequent induction of IFN. Inhibits dsRNA-stimulated activation of NF-kB and IRF3. This is Transmembrane protein I329L from Ornithodoros (relapsing fever ticks).